We begin with the raw amino-acid sequence, 393 residues long: Succinate--CoA ligase [ADP-forming] subunit beta (393 aa).

Residues 9–251 (KALFEKFGVL…LNEEDPKEIE (243 aa)) enclose the ATP-grasp domain. Residues Lys-46, 53–55 (GRG), Ser-109, and Glu-114 contribute to the ATP site. 2 residues coordinate Mg(2+): Asn-206 and Asp-220. Substrate is bound by residues Asn-271 and 328–330 (GIM).

Belongs to the succinate/malate CoA ligase beta subunit family. In terms of assembly, heterotetramer of two alpha and two beta subunits. Mg(2+) serves as cofactor.

The catalysed reaction is succinate + ATP + CoA = succinyl-CoA + ADP + phosphate. It catalyses the reaction GTP + succinate + CoA = succinyl-CoA + GDP + phosphate. The protein operates within carbohydrate metabolism; tricarboxylic acid cycle; succinate from succinyl-CoA (ligase route): step 1/1. Succinyl-CoA synthetase functions in the citric acid cycle (TCA), coupling the hydrolysis of succinyl-CoA to the synthesis of either ATP or GTP and thus represents the only step of substrate-level phosphorylation in the TCA. The beta subunit provides nucleotide specificity of the enzyme and binds the substrate succinate, while the binding sites for coenzyme A and phosphate are found in the alpha subunit. The sequence is that of Succinate--CoA ligase [ADP-forming] subunit beta from Opitutus terrae (strain DSM 11246 / JCM 15787 / PB90-1).